Consider the following 398-residue polypeptide: Inner membrane protein YjgN (398 aa).

Residues 1-24 are Cytoplasmic-facing; it reads MAQVINEMDVPSHSFVFHGTGERY. The helical transmembrane segment at 25–45 threads the bilayer; it reads FLICVVNVLLTIITLGIYLPW. Topologically, residues 46–73 are periplasmic; that stretch reads ALMKCKRYLYANMEVNGQRFSYGITGGN. The chain crosses the membrane as a helical span at residues 74–94; it reads VFFSCLVFVFFYFAILMTVSA. Residue D95 is a topological domain, cytoplasmic. A helical transmembrane segment spans residues 96 to 116; the sequence is MPLIGCVLTLSLLVLLIFMAA. Topologically, residues 117 to 142 are periplasmic; sequence KGLRYQALMTSLNGVRFSFNCSMKGV. The helical transmembrane segment at 143–163 threads the bilayer; it reads WWVTFFLPILMAIGMGTVFFI. At 164–175 the chain is on the cytoplasmic side; sequence STKMLHANSSSS. A helical transmembrane segment spans residues 176–196; sequence VIVSVVLMAIVGIVSIGIFNG. The Periplasmic segment spans residues 197 to 228; the sequence is TLYSLVMSFLWSNTSFGIHRFKVKLDTAYCIK. A helical membrane pass occupies residues 229-249; that stretch reads YAILAFLALLPFLAVAGYIIF. The Cytoplasmic portion of the chain corresponds to 250-278; the sequence is DQILNAYDSSVYANDDIENLQQFMEMQRK. A helical membrane pass occupies residues 279 to 299; that stretch reads MIIAQLIYYFGIAVSTSYLTV. The Periplasmic segment spans residues 300-333; sequence SLRNHFMSNLSLNDGRIRFRSTLTYHGMLYRMCA. Residues 334–354 traverse the membrane as a helical segment; it reads LVVISGITGGLAYPLLKIWMI. Topologically, residues 355–398 are cytoplasmic; sequence DWQAKNTYLLGDLDDLPLINKEEQPDKGFLASISRGIMPSLPFL.

The protein localises to the cell inner membrane. This Escherichia coli O157:H7 protein is Inner membrane protein YjgN (yjgN).